Consider the following 111-residue polypeptide: Small ribosomal subunit protein bS16 (111 aa).

This sequence belongs to the bacterial ribosomal protein bS16 family.

The sequence is that of Small ribosomal subunit protein bS16 from Rickettsia africae (strain ESF-5).